The chain runs to 511 residues: Maturase K (511 aa).

This sequence belongs to the intron maturase 2 family. MatK subfamily.

It localises to the plastid. Its subcellular location is the chloroplast. Usually encoded in the trnK tRNA gene intron. Probably assists in splicing its own and other chloroplast group II introns. In Campsis radicans (Trumpet creeper), this protein is Maturase K.